The following is a 114-amino-acid chain: Adapter SH3BGRL (114 aa).

Positions 13–50 (SMAIKKKQQDVLGFLEANKIGFEEKDIAANEENRKWMR) are required for interaction with HER2. Residues 54-71 (PENSRPATGYPLPPQIFN) are required for interaction with PFN1, HER2, and ATG12. The short motif at 61–67 (TGYPLPP) is the SH3-binding element.

The protein belongs to the SH3BGR family. As to quaternary structure, monomer. Interacts with PFN1/Profilin-1. Interacts with ERBB2. Interacts with ATG12. Interacts with BECN1. Interacts with translating ribosomes.

Its subcellular location is the cytoplasm. It is found in the cytosol. The protein resides in the cell membrane. Its function is as follows. Appears to function as an adapter protein that bridges proteins together or proteins with mRNAs. May function as a ubiquitin ligase-substrate adapter. Additionally, associates with translating cytoplasmic ribosomes and may promote the expression of specific mRNAs. The polypeptide is Adapter SH3BGRL (SH3BGRL) (Bos taurus (Bovine)).